An 878-amino-acid chain; its full sequence is Alanine--tRNA ligase (878 aa).

Zn(2+)-binding residues include His566, His570, Cys668, and His672.

It belongs to the class-II aminoacyl-tRNA synthetase family. It depends on Zn(2+) as a cofactor.

It localises to the cytoplasm. The enzyme catalyses tRNA(Ala) + L-alanine + ATP = L-alanyl-tRNA(Ala) + AMP + diphosphate. Its function is as follows. Catalyzes the attachment of alanine to tRNA(Ala) in a two-step reaction: alanine is first activated by ATP to form Ala-AMP and then transferred to the acceptor end of tRNA(Ala). Also edits incorrectly charged Ser-tRNA(Ala) and Gly-tRNA(Ala) via its editing domain. This Bacillus velezensis (strain DSM 23117 / BGSC 10A6 / LMG 26770 / FZB42) (Bacillus amyloliquefaciens subsp. plantarum) protein is Alanine--tRNA ligase.